We begin with the raw amino-acid sequence, 426 residues long: Pyruvate, phosphate dikinase regulatory protein, chloroplastic (426 aa).

Residues 1-41 (MIGCAKPLAAPLQAWARPPSPAGRRLPPSFCAPDTSPALTR) constitute a chloroplast transit peptide. Disordered regions lie at residues 1-76 (MIGC…HLDR) and 94-124 (AALS…DGED). A compositionally biased stretch (low complexity) spans 94-119 (AALSSASVSAPPVIKSPRPEDAAVAA). 153–160 (HSVNAALG) contributes to the ADP binding site.

It belongs to the pyruvate, phosphate/water dikinase regulatory protein family. PDRP subfamily. As to quaternary structure, homodimer at pH 7.5 and homotetramer at pH 8.3. It depends on Mg(2+) as a cofactor. In terms of tissue distribution, leaf mesophyll-cells.

The protein resides in the plastid. The protein localises to the chloroplast stroma. The catalysed reaction is N(tele)-phospho-L-histidyl/L-threonyl-[pyruvate, phosphate dikinase] + ADP = N(tele)-phospho-L-histidyl/O-phospho-L-threonyl-[pyruvate, phosphate dikinase] + AMP + H(+). The enzyme catalyses N(tele)-phospho-L-histidyl/O-phospho-L-threonyl-[pyruvate, phosphate dikinase] + phosphate + H(+) = N(tele)-phospho-L-histidyl/L-threonyl-[pyruvate, phosphate dikinase] + diphosphate. The protein operates within photosynthesis; C4 acid pathway. Regulated by light/dark exposure. Functionally, bifunctional serine/threonine kinase and phosphorylase involved in the dark/light-mediated regulation of PPDK by catalyzing its phosphorylation/dephosphorylation. Dark/light-induced changes in stromal concentrations of the competing ADP and Pi substrates govern the direction of the reaction. In the dark, phosphorylates the catalytic intermediate of PPDK (PPDK-HisP), inactivating it. Light exposure induces the phosphorolysis reaction that reactivates PPDK. Phosphorylates PPDK at both Ser-528 and Thr-527. Can use ADP as a high specificity substrate and GDP as a lower affinity substrate, but has no activity with UDP. The protein is Pyruvate, phosphate dikinase regulatory protein, chloroplastic (PDRP1) of Zea mays (Maize).